The chain runs to 372 residues: Cyclin-dependent kinase 9 (372 aa).

The Protein kinase domain occupies Tyr-19–Phe-315. Residue Ile-25–Val-33 participates in ATP binding. Residue Lys-44 is modified to N6-acetyllysine; by EP300/CBP, PCAF/KAT2B and GCN5/KAT2A. ATP is bound by residues Lys-48 and Asp-104 to Cys-106. Lys-48 is modified (N6-acetyllysine; by PCAF/KAT2B and GCN5/KAT2A). The active-site Proton acceptor is Asp-149. The segment at Ala-166–Thr-191 is T-loop. Residue Asp-167 participates in ATP binding. Phosphoserine is present on Ser-175. A Phosphothreonine; by CaMK1D modification is found at Thr-186. A disordered region spans residues Arg-343–Phe-372. At Ser-347 the chain carries Phosphoserine; by CDK9 and PKA. Polar residues predominate over residues Ser-347 to Thr-366. Phosphothreonine; by CDK9 is present on Thr-350. A Phosphoserine; by CDK9 modification is found at Ser-353. Thr-354 carries the post-translational modification Phosphothreonine; by CDK9. Ser-357 carries the phosphoserine; by CDK9 modification. Phosphothreonine; by CDK9 occurs at positions 362 and 363.

Belongs to the protein kinase superfamily. CMGC Ser/Thr protein kinase family. CDC2/CDKX subfamily. As to quaternary structure, component of the super elongation complex (SEC), at least composed of EAF1, EAF2, CDK9, MLLT3/AF9, AFF (AFF1 or AFF4), the P-TEFb complex and ELL (ELL, ELL2 or ELL3). Associates with CCNT1/cyclin-T1, CCNT2/cyclin-T2 (isoform A and isoform B) or CCNK/cyclin-K to form active P-TEFb. P-TEFb forms a complex with AFF4/AF5Q31 and is part of the super elongation complex (SEC). Component of a complex which is composed of at least 5 members: HTATSF1/Tat-SF1, P-TEFb complex, RNA pol II, SUPT5H, and NCL/nucleolin. Associates with UBR5 and forms a transcription regulatory complex composed of CDK9, RNAP II, UBR5 and TFIIS/TCEA1 that can stimulate target gene transcription (e.g. gamma fibrinogen/FGG) by recruiting their promoters. Component of the 7SK snRNP inactive complex which is composed of at least 8 members: P-TEFb (composed of CDK9 and CCNT1/cyclin-T1), HEXIM1, HEXIM2, LARP7, BCDIN3, SART3 proteins and 7SK and U6 snRNAs. This inactive 7SK snRNP complex can also interact with NCOR1 and HDAC3, probably to regulate CDK9 acetylation. Release of P-TEFb from P-TEFb/7SK snRNP complex requires both PP2B to transduce calcium Ca(2+) signaling in response to stimuli (e.g. UV or hexamethylene bisacetamide (HMBA)), and PPP1CA to dephosphorylate Thr-186. This released P-TEFb remains inactive in the pre-initiation complex with BRD4 until new Thr-186 phosphorylation occurs after the synthesis of a short RNA. Interacts with BRD4; to target chromatin binding. Interacts with JMJD6. Interacts with activated nuclear STAT3 and RELA/p65. Binds to AR and MYOD1. Forms a complex composed of CDK9, CCNT1/cyclin-T1, EP300 and GATA4 that stimulates hypertrophy in cardiomyocytes. The large PER complex involved in the repression of transcriptional termination is composed of at least PER2, CDK9, DDX5, DHX9, NCBP1 and POLR2A (active). Interacts with HSF1. Interacts with TBX21. Interacts with WDR43. Interacts with ZMYND8; the association appears to occur between homodimeric ZMYND8 and the activated form of the P-TEFb complex. In terms of processing, autophosphorylation at Thr-186, Ser-347, Thr-350, Ser-353, Thr-354 and Ser-357 triggers kinase activity by promoting cyclin and substrate binding upon conformational changes. Thr-186 phosphorylation requires the calcium Ca(2+) signaling pathway, including CaMK1D and calmodulin. This inhibition is relieved by Thr-29 dephosphorylation. Phosphorylation at Ser-175 inhibits kinase activity. Can be phosphorylated on either Thr-362 or Thr-363 but not on both simultaneously. Post-translationally, dephosphorylation of Thr-186 by PPM1A and PPM1B blocks CDK9 activity and may lead to CDK9 proteasomal degradation. However, PPP1CA-mediated Thr-186 dephosphorylation is required to release P-TEFb from its inactive P-TEFb/7SK snRNP complex. Dephosphorylated at Ser-347 by the PNUTS-PP1 complex during RNA polymerase II transcription pause-release. Dephosphorylation of C-terminus Thr and Ser residues by protein phosphatase-1 (PP1) triggers CDK9 activity. N6-acetylation of Lys-44 promotes kinase activity, whereas acetylation of both Lys-44 and Lys-48 mediated by PCAF/KAT2B and GCN5/KAT2A reduces kinase activity. The acetylated form associates with PML bodies in the nuclear matrix and with the transcriptionally silent HIV-1 genome; deacetylated upon transcription stimulation. Deacetylated by SIRT7, promoting the kinase activity and subsequent 'Ser-2' phosphorylation of the C-terminal domain (CTD) of RNA polymerase II. In terms of processing, polyubiquitinated and thus activated by UBR5. This ubiquitination is promoted by TFIIS/TCEA1 and favors 'Ser-2' phosphorylation of RPB1/POLR2A CTD. As to expression, expressed at high levels in brain and kidney.

It localises to the nucleus. The protein resides in the cytoplasm. The protein localises to the PML body. The catalysed reaction is L-seryl-[protein] + ATP = O-phospho-L-seryl-[protein] + ADP + H(+). The enzyme catalyses L-threonyl-[protein] + ATP = O-phospho-L-threonyl-[protein] + ADP + H(+). It carries out the reaction [DNA-directed RNA polymerase] + ATP = phospho-[DNA-directed RNA polymerase] + ADP + H(+). Its activity is regulated as follows. Activation by Thr-186 phosphorylation is calcium Ca(2+) signaling pathway-dependent; actively inactivated by dephosphorylation mediated by PPP1CA, PPM1A and PPM1B. Reversibly repressed by acetylation at Lys-44 and Lys-48. In terms of biological role, protein kinase involved in the regulation of transcription. Member of the cyclin-dependent kinase pair (CDK9/cyclin-T) complex, also called positive transcription elongation factor b (P-TEFb), which facilitates the transition from abortive to productive elongation by phosphorylating the CTD (C-terminal domain) of the large subunit of RNA polymerase II (RNAP II) POLR2A, SUPT5H and RDBP. This complex is inactive when in the 7SK snRNP complex form. Phosphorylates EP300, MYOD1, RPB1/POLR2A and AR and the negative elongation factors DSIF and NELFE. Regulates cytokine inducible transcription networks by facilitating promoter recognition of target transcription factors (e.g. TNF-inducible RELA/p65 activation and IL-6-inducible STAT3 signaling). Promotes RNA synthesis in genetic programs for cell growth, differentiation and viral pathogenesis. P-TEFb is also involved in cotranscriptional histone modification, mRNA processing and mRNA export. Modulates a complex network of chromatin modifications including histone H2B monoubiquitination (H2Bub1), H3 lysine 4 trimethylation (H3K4me3) and H3K36me3; integrates phosphorylation during transcription with chromatin modifications to control co-transcriptional histone mRNA processing. The CDK9/cyclin-K complex has also a kinase activity towards CTD of RNAP II and can substitute for CDK9/cyclin-T P-TEFb in vitro. Replication stress response protein; the CDK9/cyclin-K complex is required for genome integrity maintenance, by promoting cell cycle recovery from replication arrest and limiting single-stranded DNA amount in response to replication stress, thus reducing the breakdown of stalled replication forks and avoiding DNA damage. In addition, probable function in DNA repair of isoform 2 via interaction with KU70/XRCC6. Promotes cardiac myocyte enlargement. RPB1/POLR2A phosphorylation on 'Ser-2' in CTD activates transcription. AR phosphorylation modulates AR transcription factor promoter selectivity and cell growth. DSIF and NELF phosphorylation promotes transcription by inhibiting their negative effect. The phosphorylation of MYOD1 enhances its transcriptional activity and thus promotes muscle differentiation. Catalyzes phosphorylation of KAT5, promoting KAT5 recruitment to chromatin and histone acetyltransferase activity. This chain is Cyclin-dependent kinase 9 (Cdk9), found in Mus musculus (Mouse).